The following is a 4903-amino-acid chain: Histone-lysine N-methyltransferase 2C (4903 aa).

2 disordered regions span residues 1 to 116 (MSSE…SEES) and 159 to 202 (LTLP…PPQQ). The span at 13 to 28 (QPPPAPPEEPGAPAPS) shows a compositional bias: pro residues. Residues S28 and S46 each carry the phosphoserine modification. Residues 34 to 46 (KRPRGRPRKDGAS) constitute a DNA-binding region (a.T hook). The span at 50-59 (RARKKPRSRG) shows a compositional bias: basic residues. The segment covering 64–81 (EDEDSMDGLETTETENIV) has biased composition (acidic residues). Residues S89 and S113 each carry the phosphoserine modification. Polar residues predominate over residues 101–116 (SKQPVSALQRSVSEES). Residues 226–261 (ELSLVGLPDAIDVQALFDSTGTCWAHHRCVEWSLGI) form a C2HC pre-PHD-type 1; degenerate zinc finger. PHD-type zinc fingers lie at residues 282 to 330 (ERCA…PEHI), 340 to 390 (DANC…CKVC), 387 to 437 (CKVC…CRIC), and 463 to 519 (DNLC…CKHL). Residues 343-388 (CAVCDSPGDLLDQFFCTTCGQHYHGMCLDIAVTPLKRAGWQCPECK) form an RING-type zinc finger. The 54-residue stretch at 435-488 (RICIECGTRSSTQWHHNCLICDTCYQQQDNLCPFCGKCYHPELQKDMLHCNMCK) folds into the DHHC domain. The disordered stretch occupies residues 671 to 703 (SEVASKELSPPKSAPETAAPEALLSPHSERSLS). An N6-acetyllysine modification is found at K751. Residues 824 to 835 (TKRKFSPGRPRS) are compositionally biased toward basic residues. Disordered stretches follow at residues 824–857 (TKRK…DTSE) and 882–904 (GFPG…GRSK). Residues 838-848 (GAWSNHNTVSP) show a composition bias toward polar residues. S847 bears the Phosphoserine mark. PHD-type zinc fingers lie at residues 950–1003 (QDMC…CTVC), 1000–1050 (CTVC…CVWC), and 1077–1132 (LSSC…CRPY). The segment at 1208–1318 (AVLQTPPDIQ…PSRDDGWREQ (111 aa)) is disordered. The span at 1217 to 1263 (QSEHSRDGEMDDSREGELMDCDGKSESSPEREAGDDETKGIEGTDAI) shows a compositional bias: basic and acidic residues. Position 1294 is a phosphoserine (S1294). The span at 1309-1318 (PSRDDGWREQ) shows a compositional bias: basic and acidic residues. Residues 1330–1352 (VAENTDKIKKRYRKRKNKLEETF) are a coiled coil. Disordered regions lie at residues 1397 to 1419 (SDPL…ADDP) and 1447 to 1473 (HSDI…RPLT). Composition is skewed to polar residues over residues 1406–1415 (TSAKPGTQGT) and 1455–1471 (ADAS…SSRP). Position 1497 is an N6-acetyllysine (K1497). Disordered regions lie at residues 1594–1617 (NAIA…ENDT) and 1698–1757 (VQMS…AKIE). Positions 1599 to 1617 (DPNSSWAPTTPSMEGENDT) are enriched in polar residues. Positions 1707–1717 (RQQQQDSIDPS) are enriched in low complexity. Residues 1718–1742 (SRIDSDLFKDPLKQRESEHEQEWKF) show a composition bias toward basic and acidic residues. Residues 1743–1790 (RQQMRQKSKQQAKIEATQKLEQVKNEQQQQQQQQQQQQQQQLASQHLL) adopt a coiled-coil conformation. K1761 carries the N6-acetyllysine modification. The tract at residues 1791–2375 (VAPGSDTPSS…MSQADTEKLR (585 aa)) is disordered. Positions 1796 to 1819 (DTPSSGAQSPLTPQAGNGNVSPAQ) are enriched in polar residues. Low complexity predominate over residues 1855–1886 (PSRIPVQESLSQSQNSQPPSPQMFSPGSSHSR). Position 1983 is a phosphoserine (S1983). The segment covering 1986–2001 (ISEQSTKGPLTTGTSD) has biased composition (polar residues). K2005 is modified (N6-acetyllysine). Polar residues-rich tracts occupy residues 2113–2124 (GTISRSASQDPY), 2137–2151 (SYSQ…NPDP), and 2325–2334 (GNFSTSSNLP). A compositionally biased stretch (low complexity) spans 2335-2347 (VSSQGQQFSSVSQ). Residues 2355–2369 (SGGTDTQNTVNMSQA) show a composition bias toward polar residues. Asymmetric dimethylarginine occurs at positions 2447 and 2563. Disordered regions lie at residues 2561 to 2668 (RSRL…DNLE), 2702 to 2736 (KDLD…NDPN), and 2786 to 2844 (VEPK…GDAD). 3 stretches are compositionally biased toward polar residues: residues 2602–2611 (QPSQCLSNQL), 2621–2636 (PPSQ…QSSI), and 2653–2668 (PLST…DNLE). The span at 2788–2807 (PKTRDQGDKTMVLEDKDLPQ) shows a compositional bias: basic and acidic residues. K2796 and K2803 each carry N6-acetyllysine. Residue S2822 is modified to Phosphoserine. Y2824 carries the phosphotyrosine modification. Basic and acidic residues predominate over residues 2825-2843 (SKEEIQSEIKNHDDSRGDA). K2826 and K2862 each carry N6-acetyllysine. A disordered region spans residues 2920-2953 (EKCDDSDIRPSGSSPPSLPISPSTHGSSLPPTLI). Residues 2929-2942 (PSGSSPPSLPISPS) are compositionally biased toward low complexity. 2 coiled-coil regions span residues 3047 to 3074 (LLQD…QRSE) and 3166 to 3193 (NDSQ…YLEE). The span at 3198 to 3214 (HRKSKKALSAKQRTAKK) shows a compositional bias: basic residues. The interval 3198-3223 (HRKSKKALSAKQRTAKKAGREFPEED) is disordered. Coiled coils occupy residues 3224 to 3270 (AEQL…QQCA) and 3387 to 3432 (FSES…QHCL). 2 disordered regions span residues 3329–3407 (PGWQ…QERQ) and 3444–3910 (SQMP…QKMA). The span at 3391-3407 (FQERERKERLREQQERQ) shows a compositional bias: basic and acidic residues. The span at 3464 to 3485 (LQQSPQHQQQIGPVLQQQNVQQ) shows a compositional bias: low complexity. 4 stretches are compositionally biased toward polar residues: residues 3486–3503 (GSVN…NEQR), 3515–3524 (PSASGGSPNF), 3557–3586 (PVAN…SLIQ), and 3632–3647 (LSET…PSEL). Basic and acidic residues-rich tracts occupy residues 3697–3739 (AEAD…KIKD) and 3795–3804 (SSTKDGKLIE). K3709 is modified (N6-acetyllysine). Polar residues predominate over residues 3871–3885 (MYSSSDSFTHLKQQN). Residues 3890-3904 (PPTPPASLPPTPPPM) show a composition bias toward pro residues. At S4027 the chain carries Phosphoserine. R4132 carries the post-translational modification Asymmetric dimethylarginine. The segment at 4159-4184 (PNVPFPPTSNGLSGYKDSSHGPAEGA) is disordered. S4260 is subject to Phosphoserine. A C2HC pre-PHD-type 2 zinc finger spans residues 4391–4431 (CRKCCFCHEEGDGLTDGPARLLNLDLDLWVHLNCALWSTEV). A PHD-type 8 zinc finger spans residues 4452 to 4499 (MKCVFCHKTGATSGCHRFRCTNIYHFTCATKAQCMFFKDKTMLCPMHK). An FYR N-terminal domain is found at 4537–4597 (DHTFRVGSLI…CRYLCSIEEK (61 aa)). Positions 4598–4683 (DGRPVFVIRI…EACENYTFRY (86 aa)) constitute an FYR C-terminal domain. The WDR5 interaction motif (WIN) signature appears at 4699–4704 (GCARSE). Residues 4763-4879 (SNVYLARSRI…KGEELCYDYK (117 aa)) form the SET domain. S-adenosyl-L-methionine-binding positions include Y4817 and 4840 to 4841 (NH). Residues C4843, C4891, C4893, and C4898 each contribute to the Zn(2+) site. The region spanning 4887–4903 (HKIPCHCGAVNCRKWMN) is the Post-SET domain.

The protein belongs to the class V-like SAM-binding methyltransferase superfamily. Histone-lysine methyltransferase family. TRX/MLL subfamily. As to quaternary structure, component of the MLL3 complex (also named ASCOM complex), at least composed of catalytic subunit KMT2C/MLL3, ASH2L, RBBP5, WDR5, NCOA6, DPY30, KDM6A, PAXIP1/PTIP, PAGR1 and alpha- and beta-tubulin. Forms a core complex with the evolutionary conserved subcomplex WRAD composed of WDR5, RBBP5, ASH2L/ASH2 and DPY30 subunits; WRAD differentially stimulates the methyltransferase activity. Interacts (via WIN motif) with WDR5. In terms of tissue distribution, in adult, detected in testis, kidney, spleen and lung, weakly expressed in brain and absent in heart and liver. First detected throughout the embryo at 8 dpc when expression is strong in forebrain neuroepithelium and absent in heart. Expressed in the eye lens between 10 and 14.5 dpc. By 13 dpc, expressed strongly in spinal cord, hand/foot plates and gonads.

It is found in the nucleus. The catalysed reaction is L-lysyl(4)-[histone H3] + S-adenosyl-L-methionine = N(6)-methyl-L-lysyl(4)-[histone H3] + S-adenosyl-L-homocysteine + H(+). Functionally, histone methyltransferase that catalyzes methyl group transfer from S-adenosyl-L-methionine to the epsilon-amino group of 'Lys-4' of histone H3 (H3K4). Part of chromatin remodeling machinery predominantly forms H3K4me1 methylation marks at active chromatin sites where transcription and DNA repair take place. Likely plays a redundant role with KMT2D in enriching H3K4me1 mark on primed and active enhancer elements. This chain is Histone-lysine N-methyltransferase 2C (Kmt2c), found in Mus musculus (Mouse).